Reading from the N-terminus, the 157-residue chain is Large ribosomal subunit protein uL13m (157 aa).

The transit peptide at 1-29 directs the protein to the mitochondrion; it reads MSTLNGQTALAYAKVWHHVSAKNVPLGRL.

Belongs to the universal ribosomal protein uL13 family. In terms of assembly, component of the mitochondrial large ribosomal subunit (mt-LSU). Mature yeast 74S mitochondrial ribosomes consist of a small (37S) and a large (54S) subunit. The 37S small subunit contains a 15S ribosomal RNA (15S mt-rRNA) and at least 32 different proteins. The 54S large subunit contains a 21S rRNA (21S mt-rRNA) and at least 45 different proteins.

Its subcellular location is the mitochondrion. In terms of biological role, component of the mitochondrial ribosome (mitoribosome), a dedicated translation machinery responsible for the synthesis of mitochondrial genome-encoded proteins, including at least some of the essential transmembrane subunits of the mitochondrial respiratory chain. The mitoribosomes are attached to the mitochondrial inner membrane and translation products are cotranslationally integrated into the membrane. This is Large ribosomal subunit protein uL13m from Schizosaccharomyces pombe (strain 972 / ATCC 24843) (Fission yeast).